The chain runs to 180 residues: Thioredoxin 3 (180 aa).

The Cytoplasmic portion of the chain corresponds to 1 to 3 (MAL). Residues 4-24 (ICIGSVCFSLFHIGVIILLII) traverse the membrane as a helical; Signal-anchor for type II membrane protein segment. Residues 25–180 (NYFSSHIKKI…FQKYCLEKAK (156 aa)) are Lumenal-facing. A Thioredoxin domain is found at 29–176 (SHIKKIFPSF…IEKAFQKYCL (148 aa)). Residues cysteine 99 and cysteine 102 each act as nucleophile in the active site. Residues cysteine 99 and cysteine 102 are joined by a disulfide bond.

Belongs to the thioredoxin family. Post-translationally, the disulfide bond between Cys-99 and Cys-102 acts as a redox-active center and is reduced by thioredoxin reductase TRXR.

It localises to the endoplasmic reticulum membrane. Functionally, participates in various redox reactions through the reversible oxidation of its active center dithiol to a disulfide and catalyzes dithiol-disulfide exchange reactions. This chain is Thioredoxin 3, found in Plasmodium falciparum (isolate 3D7).